Consider the following 358-residue polypeptide: Bis(monoacylglycero)phosphate synthase CLN5 (358 aa).

The Cytoplasmic portion of the chain corresponds to 1–23; the sequence is MAQEVDTAQGAEMRRGAGAARGR. A helical; Signal-anchor for type II membrane protein membrane pass occupies residues 24-40; that stretch reads ASWCWALALLWLAVVPG. Residues 41-358 are Lumenal-facing; that stretch reads WSRVSGIPSR…PIRNKTLSGL (318 aa). 2 cysteine pairs are disulfide-bonded: Cys-70–Cys-159 and Cys-77–Cys-165. The Proton acceptor role is filled by His-117. Asn-130, Asn-143, Asn-178, and Asn-203 each carry an N-linked (GlcNAc...) asparagine glycan. Cys-231 acts as the Nucleophile; Acyl-thioester intermediate in catalysis. N-linked (GlcNAc...) asparagine glycans are attached at residues Asn-255, Asn-271, and Asn-281. Residues 304-343 form a membrane-anchoring region; it reads FLLSLLQIFDAVIVHKQFYLFYNFEYWFLPMKFPFIKITY. Asn-352 carries an N-linked (GlcNAc...) asparagine glycan.

This sequence belongs to the CLN5 family. In terms of assembly, multimer. Interacts with SORT1, RAB5A and RAB7A. Interacts with PPT1, TPP1, CLN3, CLN6, CLN8, ATP5F1A and ATP5F1B. Post-translationally, N-glycosylated with both high mannose and complex type sugars. Glycosylation is important for proper folding and trafficking to the lysosomes. The type II membrane signal anchor is proteolytically cleaved to produce a mature form that is transported to the lysosomes (Bis(monoacylglycero)phosphate synthase CLN5, secreted form). In terms of processing, can undergo proteolytic cleavage at the C-terminus, probably by a cysteine protease and may involve the removal of approximately 10-15 residues from the C-terminal end. In terms of tissue distribution, ubiquitous.

It is found in the lysosome. The protein resides in the membrane. It catalyses the reaction S-hexadecanoyl-L-cysteinyl-[protein] + H2O = L-cysteinyl-[protein] + hexadecanoate + H(+). It carries out the reaction 2 1-acyl-sn-glycero-3-phospho-(1'-sn-glycerol) = 1-acyl-sn-glycero-3-phospho-(3'-acyl-sn-1'-glycerol) + sn-glycero-3-phospho-(1'-sn-glycerol). The catalysed reaction is 2 1-(9Z-octadecenoyl)-sn-glycero-3-phospho-(1'-sn-glycerol) = 1-(9Z-octadecenoyl)-sn-glycero-3-phospho-(3'-(9Z-octadecenoyl)-1'-sn-glycerol) + sn-glycero-3-phospho-(1'-sn-glycerol). The enzyme catalyses 2 1-octadecanoyl-sn-glycero-3-phospho-(1'-sn-glycerol) = 1-octadecanoyl-sn-glycero-3-phospho-(3'-octadecanoyl-1'-sn-glycerol) + sn-glycero-3-phospho-(1'-sn-glycerol). It catalyses the reaction 2 1-hexadecanoyl-sn-glycero-3-phospho-(1'-sn-glycerol) = 1-hexadecanoyl-sn-glycero-3-phospho-(3'-hexadecanoyl-1'-sn-glycerol) + sn-glycero-3-phospho-(1'-sn-glycerol). It carries out the reaction 2 1-tetradecanoyl-sn-glycero-3-phospho-(1'-sn-glycerol) = 1-tetradecanoyl-sn-glycero-3-phospho-(3'-tetradecanoyl-1'-sn-glycerol) + sn-glycero-3-phospho-(1'-sn-glycerol). Anionic phospholipids activate bis(monoacylglycero)phosphate (BMP) synthase activity. Amiodarone, a cationic amphiphilic drug inhibits BMP synthase activity towards liposomal lysophosphatidylglycerol. Palmostatin B inhibits palmitoyl protein thioesterase activity. In terms of biological role, catalyzes the synthesis of bis(monoacylglycero)phosphate (BMP) via transacylation of 2 molecules of lysophosphatidylglycerol (LPG). BMP also known as lysobisphosphatidic acid plays a key role in the formation of intraluminal vesicles and in maintaining intracellular cholesterol homeostasis. Can use only LPG as the exclusive lysophospholipid acyl donor for base exchange and displays BMP synthase activity towards various LPGs (LPG 14:0, LPG 16:0, LPG 18:0, LPG 18:1) with a higher preference for longer chain lengths. Plays a role in influencing the retrograde trafficking of lysosomal sorting receptors SORT1 and IGF2R from the endosomes to the trans-Golgi network by controlling the recruitment of retromer complex to the endosomal membrane. Regulates the localization and activation of RAB7A which is required to recruit the retromer complex to the endosomal membrane. Its function is as follows. Exhibits palmitoyl protein thioesterase (S-depalmitoylation) activity in vitro and most likely plays a role in protein S-depalmitoylation. This chain is Bis(monoacylglycero)phosphate synthase CLN5 (CLN5), found in Homo sapiens (Human).